The chain runs to 42 residues: Proline-rich antimicrobial peptide 2 (42 aa).

Hemolymph.

The protein resides in the secreted. In terms of biological role, antimicrobial protein. Has antibacterial activity against the Gram-positive bacterium M.luteus (MIC=8.6 uM). Lacks antibacterial activity against the Gram-positive bacteria B.circulans, L.monocytogenes, S.aureus, and S.lutea, and the Gram-negative bacteria E.coli D31, E.coli ATCC 25922, and S.typhimurium. Lacks antifungal activity against S.cerevisiae, P.pastoris, Z.marxianus, C.albicans, C.fructus, C.wickerhamii, A.niger, F.oxysporum, and T.harizianum. This chain is Proline-rich antimicrobial peptide 2, found in Galleria mellonella (Greater wax moth).